We begin with the raw amino-acid sequence, 189 residues long: MARLCAFLMVLAVLSYWPTCSLGCDLPQTHNLRNKRALTLLVKMRRLSPLSCLKDRKDFGFPQEKVGAQQIQEAQAIPVLTELTQQILTLFTSKDSSAAWNATLLDSFCNDLHQLLNDLQGCLMQQVEIQALPLTQEDSLLAVRTYFHRITVFLREKKHSPCAWEVVRAEVWRALSSSAKLLARLNEDE.

Positions 1–23 are cleaved as a signal peptide; sequence MARLCAFLMVLAVLSYWPTCSLG. 2 disulfide bridges follow: C24–C122 and C52–C162. An N-linked (GlcNAc...) asparagine glycan is attached at N101.

Belongs to the alpha/beta interferon family.

It localises to the secreted. Functionally, produced by macrophages, IFN-alpha have antiviral activities. Interferon stimulates the production of two enzymes: a protein kinase and an oligoadenylate synthetase. This chain is Interferon alpha-6 (Ifna6), found in Mus musculus (Mouse).